Here is a 202-residue protein sequence, read N- to C-terminus: uncharacterized protein (202 aa).

The Smr domain maps to 116 to 196 (LDLHGMTCSE…GKGTTWVLLK (81 aa)).

This is an uncharacterized protein from Treponema pallidum (strain Nichols).